Reading from the N-terminus, the 107-residue chain is Circadian clock oscillator protein KaiB (107 aa).

This sequence belongs to the KaiB family. May undergo a major conformational rearrangment; in the free state forms homooligomers. When bound to KaiC switches to a monomeric thioredoxin-fold (KaiB(fs)). The active oscillator complex is probably KaiC(6):KaiB(6).

Its function is as follows. Component of the KaiBC clock protein complex, which constitutes the main circadian regulator in cyanobacteria; it may modify the ATPase activity of KaiC. Does not stimulate dephosphorylation of endogenous KaiC, although it does stimulate dephosphorylation of KiaC from S.elongatus strain PCC 7942. Reduces the ATPase activity of KaiC by about half in vitro, which may be its function in vivo. In terms of biological role, may be a metamorphic protein which reversibly switches between an inactive tetrameric fold and a rare, thioredoxin-like monomeric fold (KaiB(fs)). KaiB(fs) binds phospho-KaiC, and perhaps clock output effectors. In Prochlorococcus marinus subsp. pastoris (strain CCMP1986 / NIES-2087 / MED4), this protein is Circadian clock oscillator protein KaiB.